The sequence spans 560 residues: Vacuolar protein 8 (560 aa).

Glycine 2 carries the N-myristoyl glycine lipid modification. A lipid anchor (S-palmitoyl cysteine) is attached at cysteine 4. ARM repeat units follow at residues 39–76 (NRAE…FAEI), 77–116 (TERD…NLAV), 118–157 (TDNK…NLAT), 159–198 (EENK…NMTH), 200–239 (DENR…NIAV), 243–282 (NRRK…NLAS), 284–323 (EKYQ…NISI), 325–365 (PQNE…NLAA), and 409–448 (DELK…NLSS).

The protein belongs to the beta-catenin family.

It localises to the vacuole membrane. Functionally, functions in both vacuole inheritance and protein targeting from the cytoplasm to vacuole. In Chaetomium globosum (strain ATCC 6205 / CBS 148.51 / DSM 1962 / NBRC 6347 / NRRL 1970) (Soil fungus), this protein is Vacuolar protein 8 (VAC8).